A 465-amino-acid chain; its full sequence is MASTTSTKKMMEEATCSICLSLMTNPVSINCGHSYCHLCITDFFKNPSQKQLRQETFCCPQCRAPFHMDSLRPNKQLGSLIEALKETDQEMSCEEHGEQFHLFCEDEGQLICWRCERAPQHKGHTTALVEDVCQGYKEKLQKAVTKLKQLEDRCTEQKLSTAMRITKWKEKVQIQRQKIRSDFKNLQCFLHEEEKSYLWRLEKEEQQTLSRLRDYEAGLGLKSNELKSHILELEEKCQGSAQKLLQNVNDTLSRSWAVKLETSEAVSLELHTMCNVSKLYFDVKKMLRSHQVSVTLDPDTAHHELILSEDRRQVTRGYTQENQDTSSRRFTAFPCVLGCEGFTSGRRYFEVDVGEGTGWDLGVCMENVQRGTGMKQEPQSGFWTLRLCKKKGYVALTSPPTSLHLHEQPLLVGIFLDYEAGVVSFYNGNTGCHIFTFPKASFSDTLRPYFQVYQYSPLFLPPPGD.

The RING-type zinc-finger motif lies at 16–63 (CSICLSLMTNPVSINCGHSYCHLCITDFFKNPSQKQLRQETFCCPQCR). Position 70 is a phosphoserine (S70). Residues 88–129 (DQEMSCEEHGEQFHLFCEDEGQLICWRCERAPQHKGHTTALV) form a B box-type zinc finger. C93, H96, C115, and H121 together coordinate Zn(2+). Residues 274 to 465 (CNVSKLYFDV…SPLFLPPPGD (192 aa)) form the B30.2/SPRY domain.

Interacts (via B30.2/SPRY domain) with TAB2 and TAB3. In terms of tissue distribution, ubiquitous.

It localises to the cytoplasm. It carries out the reaction S-ubiquitinyl-[E2 ubiquitin-conjugating enzyme]-L-cysteine + [acceptor protein]-L-lysine = [E2 ubiquitin-conjugating enzyme]-L-cysteine + N(6)-ubiquitinyl-[acceptor protein]-L-lysine.. It participates in protein modification; protein ubiquitination. It functions in the pathway protein modification; protein sumoylation. Its function is as follows. E3 ubiquitin-protein and E3 SUMO-protein ligase that acts as a regulator of innate immunity. Acts as a negative regulator of type I interferon IFN-beta production by catalyzing 'Lys-48'-linked polyubiquitination of AZI2/NAP1, leading to its degradation. Mediates 'Lys-48'-linked polyubiquitination and proteasomal degradation of the critical TLR adapter TICAM1, inhibiting TLR3-mediated type I interferon signaling. Acts as positive regulator of the cGAS-STING pathway by acting as a E3 SUMO-protein ligase: mediates sumoylation of CGAS and STING, preventing their degradation and thereby activating the innate immune response to DNA virus. Also acts as a negative regulator of NF-kappa-B signaling independently of its E3 protein ligase activity by promoting lysosome-dependent degradation of TAB2 and TAB3 adapters. This is E3 ubiquitin-protein ligase TRIM38 from Homo sapiens (Human).